Consider the following 121-residue polypeptide: Large ribosomal subunit protein bL19 (121 aa).

This sequence belongs to the bacterial ribosomal protein bL19 family.

Functionally, this protein is located at the 30S-50S ribosomal subunit interface and may play a role in the structure and function of the aminoacyl-tRNA binding site. The polypeptide is Large ribosomal subunit protein bL19 (Polaromonas sp. (strain JS666 / ATCC BAA-500)).